A 48-amino-acid polypeptide reads, in one-letter code: Large ribosomal subunit protein eL40 (48 aa).

Belongs to the eukaryotic ribosomal protein eL40 family.

The sequence is that of Large ribosomal subunit protein eL40 from Methanocella arvoryzae (strain DSM 22066 / NBRC 105507 / MRE50).